Reading from the N-terminus, the 219-residue chain is ATP phosphoribosyltransferase (219 aa).

Belongs to the ATP phosphoribosyltransferase family. Short subfamily. In terms of assembly, heteromultimer composed of HisG and HisZ subunits.

The protein resides in the cytoplasm. The catalysed reaction is 1-(5-phospho-beta-D-ribosyl)-ATP + diphosphate = 5-phospho-alpha-D-ribose 1-diphosphate + ATP. Its pathway is amino-acid biosynthesis; L-histidine biosynthesis; L-histidine from 5-phospho-alpha-D-ribose 1-diphosphate: step 1/9. Its function is as follows. Catalyzes the condensation of ATP and 5-phosphoribose 1-diphosphate to form N'-(5'-phosphoribosyl)-ATP (PR-ATP). Has a crucial role in the pathway because the rate of histidine biosynthesis seems to be controlled primarily by regulation of HisG enzymatic activity. In Paramagnetospirillum magneticum (strain ATCC 700264 / AMB-1) (Magnetospirillum magneticum), this protein is ATP phosphoribosyltransferase.